Here is a 377-residue protein sequence, read N- to C-terminus: G-protein coupled receptor 54 (377 aa).

Over 1–49 (MYSSEELWNSTEQVWINGSGTNFSLGRHEDDEEEEGDKHPFFTDAWLVP) the chain is Extracellular. Residues Asn-9, Asn-17, and Asn-22 are each glycosylated (N-linked (GlcNAc...) asparagine). The chain crosses the membrane as a helical span at residues 50 to 70 (LFFSLIMLVGLVGNSLVIYVI). Topologically, residues 71–91 (SKHRQMRTATNFYIANLAATD) are cytoplasmic. The chain crosses the membrane as a helical span at residues 92–112 (IIFLVCCVPFTATLYPLPGWI). At 113-119 (FGNFMCK) the chain is on the extracellular side. Cysteines 118 and 198 form a disulfide. A helical transmembrane segment spans residues 120–140 (FVAFLQQVTVQATCITLTAMS). The Cytoplasmic portion of the chain corresponds to 141–160 (GDRCYVTVYPLKSLRHRTPK). A helical transmembrane segment spans residues 161–181 (VAMIVSICIWIGSFVLSTPIL). Residues 182–209 (MYQRIEEGYWYGPRQYCMERFPSKTHER) lie on the Extracellular side of the membrane. The chain crosses the membrane as a helical span at residues 210–230 (AFILYQFIAAYLLPVLTISFC). The Cytoplasmic segment spans residues 231 to 269 (YTLMVKRVGQPTVEPVDNNYQVNLLSERTISIRSKVSKM). Residues 270 to 290 (VVVIVLLFAICWGPIQIFVLF) traverse the membrane as a helical segment. The Extracellular segment spans residues 291–305 (QSFYPNYQPNYATYK). A helical membrane pass occupies residues 306-328 (IKTWANCMSYANSSVNPIVYGFM). Topologically, residues 329–377 (GASFQKSFRKTFPFLFKHKVRDSSMASRTANAEIKFVAAEEGNNNNAVN) are cytoplasmic.

The protein belongs to the G-protein coupled receptor 1 family. In terms of tissue distribution, expressed in a significantly high percentage (45-60%) of mature GnRH1, GnRH2, and GnRH3 neurons and in immature GnRH3 neurons, which had migrated to the vicinity of their final locations in the brain. Only 5% of immature GnRH1 and GnRH2 neurons have receptor transcripts.

It is found in the cell membrane. Its function is as follows. Receptor speculated to be essential for sexual development. May regulate gonadotropin-releasing hormone (GnRH) secretion. The receptor expression could be a 'stop signal' for GnRH1, GnRH2, and GnRH3 neuronal migration, leading to suppression of cell growth and modulation of GnRH secretion, which is important for normal sexual development. The sequence is that of G-protein coupled receptor 54 (gpr54) from Oreochromis niloticus (Nile tilapia).